The following is an 81-amino-acid chain: ATP synthase subunit c (81 aa).

2 helical membrane passes run 7–27 and 53–73; these read FVALAAGLIIGLGAIGACIGI and FLLAGLIDAAFLIGVGIAMMF.

This sequence belongs to the ATPase C chain family. F-type ATPases have 2 components, F(1) - the catalytic core - and F(0) - the membrane proton channel. F(1) has five subunits: alpha(3), beta(3), gamma(1), delta(1), epsilon(1). F(0) has three main subunits: a(1), b(2) and c(10-14). The alpha and beta chains form an alternating ring which encloses part of the gamma chain. F(1) is attached to F(0) by a central stalk formed by the gamma and epsilon chains, while a peripheral stalk is formed by the delta and b chains.

It is found in the cell inner membrane. F(1)F(0) ATP synthase produces ATP from ADP in the presence of a proton or sodium gradient. F-type ATPases consist of two structural domains, F(1) containing the extramembraneous catalytic core and F(0) containing the membrane proton channel, linked together by a central stalk and a peripheral stalk. During catalysis, ATP synthesis in the catalytic domain of F(1) is coupled via a rotary mechanism of the central stalk subunits to proton translocation. In terms of biological role, key component of the F(0) channel; it plays a direct role in translocation across the membrane. A homomeric c-ring of between 10-14 subunits forms the central stalk rotor element with the F(1) delta and epsilon subunits. The polypeptide is ATP synthase subunit c (Azoarcus sp. (strain BH72)).